Reading from the N-terminus, the 165-residue chain is 3-isopropylmalate dehydratase small subunit (165 aa).

Belongs to the LeuD family. LeuD type 2 subfamily. As to quaternary structure, heterodimer of LeuC and LeuD.

It catalyses the reaction (2R,3S)-3-isopropylmalate = (2S)-2-isopropylmalate. It participates in amino-acid biosynthesis; L-leucine biosynthesis; L-leucine from 3-methyl-2-oxobutanoate: step 2/4. Catalyzes the isomerization between 2-isopropylmalate and 3-isopropylmalate, via the formation of 2-isopropylmaleate. The polypeptide is 3-isopropylmalate dehydratase small subunit (Lachnoclostridium phytofermentans (strain ATCC 700394 / DSM 18823 / ISDg) (Clostridium phytofermentans)).